A 113-amino-acid polypeptide reads, in one-letter code: MQAKAVTKYVRISPTKVRPVMDLVRGKPVDRALAILRYLPHKAAREIARTIESARANATNNYDMAPDALVVKYIFADEGPAFKRIMPRARGRADRIRKRTTHITVIVDDGEEM.

The protein belongs to the universal ribosomal protein uL22 family. In terms of assembly, part of the 50S ribosomal subunit.

Functionally, this protein binds specifically to 23S rRNA; its binding is stimulated by other ribosomal proteins, e.g. L4, L17, and L20. It is important during the early stages of 50S assembly. It makes multiple contacts with different domains of the 23S rRNA in the assembled 50S subunit and ribosome. Its function is as follows. The globular domain of the protein is located near the polypeptide exit tunnel on the outside of the subunit, while an extended beta-hairpin is found that lines the wall of the exit tunnel in the center of the 70S ribosome. The polypeptide is Large ribosomal subunit protein uL22 (Roseiflexus castenholzii (strain DSM 13941 / HLO8)).